A 335-amino-acid chain; its full sequence is uncharacterized protein (335 aa).

Positions 21 to 258 constitute an ABC transporter domain; sequence VMTSDLRKVY…QNTYHVQGQN (238 aa). 60 to 67 is an ATP binding site; that stretch reads GPNGAGKT.

Belongs to the ABC transporter superfamily.

This is an uncharacterized protein from Nostoc sp. (strain PCC 7120 / SAG 25.82 / UTEX 2576).